The primary structure comprises 442 residues: 3-phosphoshikimate 1-carboxyvinyltransferase (442 aa).

3 residues coordinate 3-phosphoshikimate: lysine 25, serine 26, and arginine 30. Lysine 25 contacts phosphoenolpyruvate. Residues glycine 97 and arginine 125 each contribute to the phosphoenolpyruvate site. Serine 170, glutamine 172, aspartate 323, and lysine 350 together coordinate 3-phosphoshikimate. Glutamine 172 lines the phosphoenolpyruvate pocket. The active-site Proton acceptor is aspartate 323. Positions 354 and 399 each coordinate phosphoenolpyruvate.

Belongs to the EPSP synthase family. In terms of assembly, monomer.

It localises to the cytoplasm. It catalyses the reaction 3-phosphoshikimate + phosphoenolpyruvate = 5-O-(1-carboxyvinyl)-3-phosphoshikimate + phosphate. Its pathway is metabolic intermediate biosynthesis; chorismate biosynthesis; chorismate from D-erythrose 4-phosphate and phosphoenolpyruvate: step 6/7. Catalyzes the transfer of the enolpyruvyl moiety of phosphoenolpyruvate (PEP) to the 5-hydroxyl of shikimate-3-phosphate (S3P) to produce enolpyruvyl shikimate-3-phosphate and inorganic phosphate. In Bartonella henselae (strain ATCC 49882 / DSM 28221 / CCUG 30454 / Houston 1) (Rochalimaea henselae), this protein is 3-phosphoshikimate 1-carboxyvinyltransferase.